The following is a 483-amino-acid chain: MELDKMDENDWKYHGEGNKSIVVSHLRHCQVLRLLKVPSEDSAHTRQTAEQTLRHILNIMDYSKHVMKPLLGEKYVHSGEVVRLPLDFLRQMSLKVQQERPELRCDKVMDTFSGCGLCLPDLTQLPLHHLRDHRPPICVEIKPKCGFLPFSRHMTKECKWKVCRFCMHQHYKLANGKWKRLSRYCPLDLFSGSKQRMYVALKNLLEEPQNNLKIFKGGELIFSCKDDAKQQPDLNNLIQHLRPYFPHTNGLYNGHQPGKVILNEFIQVICSALLSGGDSNRSGEPRKMHLSESKPHCEASPFPRDLIRNGHHGLPKDSVLAKILQVQMLDNLDIEGIYPLYKRVEQYLEEFPKERIRLQIDGPYDESFMDTVKSCLNEDDGSVEYAIGKVHQYRVAMTAKDCSVMITFAPCEEDEEHKLNLEKPRFTYSVSILDLDTKPYEGIPHQYKLDSKIVNYYLRSTQAPPPSSLYKERQECTLLFHAV.

Residues 140–144 (EIKPK) carry the EXKPK motif motif. Residues 279-298 (SNRSGEPRKMHLSESKPHCE) are disordered. Basic and acidic residues predominate over residues 281–297 (RSGEPRKMHLSESKPHC).

Belongs to the IPK1 type 2 family. In terms of tissue distribution, expressed both maternally and zygotically. Expressed in cleavage-stage embryos. Ubiquitously distributed throughout blastula stages of embryogenesis. At the onset of gastrulation, it is enriched in cells around the blastoderm margin. At shield stage, expression is detected in the deep involuted cells that contribute to mesendoderm. During mid and late gastrula stages, it is strongly expressed in axial mesendoderm. However, it is not present in the nascent tailbud at yolk plug closure (YPC) stage. Expression in axial mesendoderm is reduced at the 2 somite stage (SS). At 6 SS, it is expressed in cells surrounding Kupffer's vesicle, but apparently not within. By 10 SS, it is no longer detected as a specific signal above background.

The protein resides in the cytoplasm. It localises to the nucleus. The enzyme catalyses 1D-myo-inositol 1,3,4,5,6-pentakisphosphate + ATP = 1D-myo-inositol hexakisphosphate + ADP + H(+). In terms of biological role, phosphorylates Ins(1,3,4,5,6)P5 at position 2 to form Ins(1,2,3,4,5,6)P6 (InsP6 or phytate). InsP6 is involved in many processes such as mRNA export, non-homologous end-joining, endocytosis and ion channel regulation. InsP6 also acts as a key regulator of left-right asymmetry in embryo, probably by regulating asymmetric Ca(2+) during left-right specification. In Danio rerio (Zebrafish), this protein is Inositol-pentakisphosphate 2-kinase (ippk).